The sequence spans 283 residues: Pantothenate synthetase (283 aa).

30–37 provides a ligand contact to ATP; it reads MGNLHDGH. Residue His-37 is the Proton donor of the active site. Gln-61 serves as a coordination point for (R)-pantoate. Residue Gln-61 participates in beta-alanine binding. An ATP-binding site is contributed by 149–152; that stretch reads GEKD. (R)-pantoate is bound at residue Gln-155. An ATP-binding site is contributed by 186 to 189; sequence LSSR.

The protein belongs to the pantothenate synthetase family. In terms of assembly, homodimer.

It localises to the cytoplasm. The catalysed reaction is (R)-pantoate + beta-alanine + ATP = (R)-pantothenate + AMP + diphosphate + H(+). Its pathway is cofactor biosynthesis; (R)-pantothenate biosynthesis; (R)-pantothenate from (R)-pantoate and beta-alanine: step 1/1. Functionally, catalyzes the condensation of pantoate with beta-alanine in an ATP-dependent reaction via a pantoyl-adenylate intermediate. This Escherichia coli O6:K15:H31 (strain 536 / UPEC) protein is Pantothenate synthetase.